The following is a 329-amino-acid chain: DNA polymerase III subunit delta' (329 aa).

In terms of assembly, component of the DNA clamp loading complex consisting of tau(3):delta(1):delta'(1). The DNA polymerase III holoenzyme complex contains at least 10 different subunits organized into 3 functionally essential subassemblies: the Pol III core, the beta sliding clamp processivity factor and the clamp-loading complex. The Pol III core (subunits alpha, epsilon and theta) contains the polymerase and the 3'-5' exonuclease proofreading activities. The polymerase is tethered to the template via the dimeric beta sliding clamp processivity factor. The DNA clamp-loading complex assembles the beta sliding clamp onto the primed template and plays a central role in the organization and communication at the replication fork.

The protein localises to the cytoplasm. It localises to the nucleoid. It carries out the reaction DNA(n) + a 2'-deoxyribonucleoside 5'-triphosphate = DNA(n+1) + diphosphate. Its function is as follows. DNA polymerase III is a complex, multichain enzyme responsible for most of the replicative synthesis in bacteria. This is DNA polymerase III subunit delta' (holB) from Bacillus subtilis (strain 168).